Consider the following 277-residue polypeptide: 3-methyl-2-oxobutanoate hydroxymethyltransferase (277 aa).

Asp49 and Asp88 together coordinate Mg(2+). Residues 49-50, Asp88, and Lys118 contribute to the 3-methyl-2-oxobutanoate site; that span reads DS. Position 120 (Glu120) interacts with Mg(2+). Catalysis depends on Glu186, which acts as the Proton acceptor.

The protein belongs to the PanB family. As to quaternary structure, homodecamer; pentamer of dimers. Mg(2+) serves as cofactor.

The protein resides in the cytoplasm. The catalysed reaction is 3-methyl-2-oxobutanoate + (6R)-5,10-methylene-5,6,7,8-tetrahydrofolate + H2O = 2-dehydropantoate + (6S)-5,6,7,8-tetrahydrofolate. It functions in the pathway cofactor biosynthesis; (R)-pantothenate biosynthesis; (R)-pantoate from 3-methyl-2-oxobutanoate: step 1/2. Its function is as follows. Catalyzes the reversible reaction in which hydroxymethyl group from 5,10-methylenetetrahydrofolate is transferred onto alpha-ketoisovalerate to form ketopantoate. The polypeptide is 3-methyl-2-oxobutanoate hydroxymethyltransferase (Cereibacter sphaeroides (strain ATCC 17029 / ATH 2.4.9) (Rhodobacter sphaeroides)).